A 744-amino-acid polypeptide reads, in one-letter code: Dual specificity protein kinase shkD (744 aa).

The tract at residues 1–276 (MKRFFSNLFK…SGPPEILPEE (276 aa)) is disordered. 3 stretches are compositionally biased toward low complexity: residues 25 to 70 (PTTS…NSNQ), 79 to 107 (SPST…SFTP), and 127 to 200 (TSTT…QTAS). Residues 201-210 (VNHTSSDQSL) show a composition bias toward polar residues. Residues 211 to 236 (NAQNVTQTNNNNNNNNNNNNNNNANN) are compositionally biased toward low complexity. A Protein kinase domain is found at 277-534 (IDRTDFLGQG…EILFRLNEIL (258 aa)). Residues 283 to 291 (LGQGSFGSV) and lysine 304 each bind ATP. Residue aspartate 400 is the Proton acceptor of the active site. The region spanning 641 to 734 (WFHGDIVREQ…LVPCPKFTQE (94 aa)) is the SH2 domain.

This sequence belongs to the protein kinase superfamily. Ser/Thr protein kinase family. SH2 domain-containing protein kinase subfamily.

The protein localises to the membrane. The catalysed reaction is L-seryl-[protein] + ATP = O-phospho-L-seryl-[protein] + ADP + H(+). It catalyses the reaction L-threonyl-[protein] + ATP = O-phospho-L-threonyl-[protein] + ADP + H(+). Functionally, required for proper chemotaxis and phagocytosis; proper spatiotemporal control of F-actin levels in chemotaxing cells. Negative regulator of the PI3K (phosphatidylinositol 3 kinase) pathway. Predominantly phosphorylates serines and threonines and tyrosines at a lower level. The sequence is that of Dual specificity protein kinase shkD (shkD) from Dictyostelium discoideum (Social amoeba).